A 147-amino-acid polypeptide reads, in one-letter code: Large ribosomal subunit protein uL13 (147 aa).

It belongs to the universal ribosomal protein uL13 family. Part of the 50S ribosomal subunit.

Functionally, this protein is one of the early assembly proteins of the 50S ribosomal subunit, although it is not seen to bind rRNA by itself. It is important during the early stages of 50S assembly. The sequence is that of Large ribosomal subunit protein uL13 from Pediococcus pentosaceus (strain ATCC 25745 / CCUG 21536 / LMG 10740 / 183-1w).